The chain runs to 116 residues: Antimicrobial peptide 1b (116 aa).

The signal sequence occupies residues 1–34 (MKPHMSATVLRAPRVAAILLAVVLAAVLATAVNG). In terms of domain architecture, Chitin-binding type-1 spans 35 to 77 (AQRCGDQARGAKCPNCLCCGKYGFCGSGDAYCGAGSCQSQCRG). Intrachain disulfides connect cysteine 38–cysteine 53, cysteine 47–cysteine 59, cysteine 50–cysteine 78, cysteine 52–cysteine 66, and cysteine 71–cysteine 75. A propeptide spanning residues 80–116 (DDVVGQALPAEPGSTRATAASSASARGLNLTATTGGP) is cleaved from the precursor. A disordered region spans residues 89–116 (AEPGSTRATAASSASARGLNLTATTGGP). Positions 93–105 (STRATAASSASAR) are enriched in low complexity.

Its function is as follows. Binds chitin. Has antifungal activity against the fungi F.solani (IC(50)=5 ug/ml), F.verticillioides (IC(50)=30 ug/ml), F.oxysporum (IC(50)=5 ug/ml), B.sorokiniana (IC(50)=5 ug/ml), B.cinerea (IC(50)=20 ug/ml) and N.crassa (IC(50)=10 ug/ml). Inhibits hyphal elongation and causes browning of hyphae in F.oxysporum. Causes destruction and discoloration of spores in B.sorokiniana. Inhibits the development of disease caused by the fungus P.infestans on potato tubers. Has antibacterial activity against the Gram-negative bacteria P.syringae and E.carotovora, and the Gram-positive bacterium C.michiganensis. Functionally, has antifungal activity against F.verticillioides (IC(50)=2.7 ug/ml). At concentrations between 45 uM and 225 uM, inhibits activity of metalloproteinase fungalysin Fv-cpm from F.verticillioides. This chain is Antimicrobial peptide 1b, found in Triticum kiharae (Wheat).